The following is a 116-amino-acid chain: Carbohydrate-binding protein AQN-3 (116 aa).

The cysteines at positions 9 and 30 are disulfide-linked. Residues 9 to 110 (CGGFLKNYSG…SSFNVYFYGI (102 aa)) form the CUB domain. The N-linked (GlcNAc...) asparagine glycan is linked to Asn-50. A disulfide bridge connects residues Cys-53 and Cys-74. At His-85 the chain carries Methylhistidine.

The protein belongs to the spermadhesin family. In terms of processing, the residue at position 85 was identified as a methylhistidine by mass spectrometry.

It is found in the secreted. AQN proteins mediate the binding of boar spermatozoa to component(s) of the egg's zona pellucida by a carbohydrate-binding mechanism. AQN proteins are secretory components of the male accessory glands being coated to the sperm surface at the time of ejaculation. They possess as well heparin-, serine-protease-inhibitor-binding capability. The chain is Carbohydrate-binding protein AQN-3 from Sus scrofa (Pig).